Consider the following 420-residue polypeptide: Glutamyl-tRNA reductase (420 aa).

Residues 49 to 52, Ser107, 112 to 114, and Gln118 contribute to the substrate site; these read TCNR and EPQ. Cys50 acts as the Nucleophile in catalysis. 187-192 provides a ligand contact to NADP(+); sequence GAGETI.

Belongs to the glutamyl-tRNA reductase family. In terms of assembly, homodimer.

It carries out the reaction (S)-4-amino-5-oxopentanoate + tRNA(Glu) + NADP(+) = L-glutamyl-tRNA(Glu) + NADPH + H(+). It participates in porphyrin-containing compound metabolism; protoporphyrin-IX biosynthesis; 5-aminolevulinate from L-glutamyl-tRNA(Glu): step 1/2. Catalyzes the NADPH-dependent reduction of glutamyl-tRNA(Glu) to glutamate 1-semialdehyde (GSA). The sequence is that of Glutamyl-tRNA reductase from Nitrosococcus oceani (strain ATCC 19707 / BCRC 17464 / JCM 30415 / NCIMB 11848 / C-107).